We begin with the raw amino-acid sequence, 530 residues long: Membrane-associated transporter protein (530 aa).

Residues 1-45 (MSGSNGPTDTHTYQSLAEDCPFGSVEQPKRSTGRLVMHSMAMFGR) lie on the Cytoplasmic side of the membrane. Residues 46 to 66 (EFCYAVEAAYVTPVLLSVGLP) form a helical membrane-spanning segment. The Extracellular portion of the chain corresponds to 67 to 68 (KS). The helical transmembrane segment at 69–89 (LYSMVWLLSPILGFLLQPVVG) threads the bilayer. Residues 90–105 (SASDHCRARWGRRRPY) lie on the Cytoplasmic side of the membrane. The helical transmembrane segment at 106–126 (ILTLAIMMLLGMALYLNGDAV) threads the bilayer. The Extracellular segment spans residues 127–138 (VSALVANPRQKL). A helical transmembrane segment spans residues 139–159 (IWAISITMVGVVLFDFSADFI). At 160-184 (DGPIKAYLFDVCSHQDKEKGLHYHA) the chain is on the cytoplasmic side. A helical membrane pass occupies residues 185–205 (LFTGFGGALGYILGAIDWVHL). Residues 206–216 (DLGRLLGTEFQ) lie on the Extracellular side of the membrane. Residues 217-237 (VMFFFSALVLILCFITHLCSI) form a helical membrane-spanning segment. The Cytoplasmic portion of the chain corresponds to 238-318 (PEAPLRDAAT…ALVNMPSHYR (81 aa)). Residues 275-299 (KNGGADTEQPVQEWKNKKPSGQSQR) form a disordered region. Residues 319 to 339 (CLCVSHLIGWTAFLSNMLFFT) form a helical membrane-spanning segment. Over 340–366 (DFMGQIVYHGDPYGAHNSTEFLIYERG) the chain is Extracellular. An N-linked (GlcNAc...) asparagine glycan is attached at Asn-356. The chain crosses the membrane as a helical span at residues 367 to 387 (VEVGCWGLCINSVFSSVYSYF). Topologically, residues 388-398 (QKAMVSYIGLK) are cytoplasmic. Residues 399–419 (GLYFMGYLLFGLGTGFIGLFP) form a helical membrane-spanning segment. The Extracellular segment spans residues 420 to 425 (NVYSTL). The chain crosses the membrane as a helical span at residues 426 to 446 (VLCSMFGVMSSTLYTVPFNLI). The Cytoplasmic segment spans residues 447–477 (AEYHREEEKEKGQEAPGGPDNQGRGKGVDCA). Residues 478 to 498 (ALTCMVQLAQILVGGGLGFLV) form a helical membrane-spanning segment. Residues 499-504 (NMAGSV) are Extracellular-facing. The chain crosses the membrane as a helical span at residues 505–525 (VVVVITASAVSLIGCCFVALF). The Cytoplasmic segment spans residues 526–530 (VRYVD).

The protein belongs to the glycoside-pentoside-hexuronide (GPH) cation symporter transporter (TC 2.A.2) family. In terms of assembly, interacts with TYRP1. Mainly expressed in eyeballs and skin melanocytes. Also detected in kidney, colon, gall bladder and pancreas.

The protein resides in the melanosome membrane. It catalyses the reaction sucrose(out) + H(+)(out) = sucrose(in) + H(+)(in). The enzyme catalyses D-glucose(out) + H(+)(out) = D-glucose(in) + H(+)(in). Functionally, proton-associated glucose and sucrose transporter. May be able to transport also fructose. Expressed at a late melanosome maturation stage where functions as a proton/glucose exporter which increase lumenal pH by decreasing glycolysis. Regulates melanogenesis by maintaining melanosome neutralization that is initially initiated by transient OCA2 and required for a proper function of the tyrosinase TYR. The sequence is that of Membrane-associated transporter protein (Slc45a2) from Mus musculus (Mouse).